The chain runs to 147 residues: Small ribosomal subunit protein uS12 (147 aa).

The protein belongs to the universal ribosomal protein uS12 family. As to quaternary structure, part of the 30S ribosomal subunit.

In terms of biological role, with S4 and S5 plays an important role in translational accuracy. Located at the interface of the 30S and 50S subunits. In Staphylothermus marinus (strain ATCC 43588 / DSM 3639 / JCM 9404 / F1), this protein is Small ribosomal subunit protein uS12.